A 369-amino-acid polypeptide reads, in one-letter code: Protein RecA (369 aa).

The segment covering 1–10 (MARTTDDSKK) has biased composition (basic and acidic residues). The disordered stretch occupies residues 1 to 20 (MARTTDDSKKAAPAAGTADE). 82-89 (GPESSGKT) contacts ATP. A disordered region spans residues 350–369 (PAAAVAAPDEGDDDLGDEEV). The span at 358-369 (DEGDDDLGDEEV) shows a compositional bias: acidic residues.

It belongs to the RecA family.

The protein resides in the cytoplasm. Can catalyze the hydrolysis of ATP in the presence of single-stranded DNA, the ATP-dependent uptake of single-stranded DNA by duplex DNA, and the ATP-dependent hybridization of homologous single-stranded DNAs. It interacts with LexA causing its activation and leading to its autocatalytic cleavage. This Gloeobacter violaceus (strain ATCC 29082 / PCC 7421) protein is Protein RecA.